The sequence spans 357 residues: Neutral protease 2 homolog BDCG_00922 (357 aa).

The signal sequence occupies residues 1–19 (MRSPQSILAIVAFATTAIA). A propeptide spanning residues 20-182 (GVVPSTEKRA…FASLNQFSKR (163 aa)) is cleaved from the precursor. Cystine bridges form between C188–C259, C266–C284, and C297–C357. H308 contacts Zn(2+). E309 is an active-site residue. Residues H312 and D323 each contribute to the Zn(2+) site.

Belongs to the peptidase M35 family. Zn(2+) is required as a cofactor.

The protein resides in the secreted. The enzyme catalyses Preferential cleavage of bonds with hydrophobic residues in P1'. Also 3-Asn-|-Gln-4 and 8-Gly-|-Ser-9 bonds in insulin B chain.. Functionally, secreted metalloproteinase that allows assimilation of proteinaceous substrates. Shows high activities on basic nuclear substrates such as histone and protamine. This is Neutral protease 2 homolog BDCG_00922 from Ajellomyces dermatitidis (strain ER-3 / ATCC MYA-2586) (Blastomyces dermatitidis).